The chain runs to 478 residues: Serralysin C (478 aa).

Residues 1–17 (MEKNLSSRDDDALHSLS) constitute a propeptide that is removed on maturation. H187 lines the Zn(2+) pocket. E188 is a catalytic residue. Residues H191 and Y227 each contribute to the Zn(2+) site. 30 residues coordinate Ca(2+): R264, G266, D296, G298, G299, D301, T338, E340, G345, G347, D349, N354, A356, N358, G362, G363, A364, G365, D367, G371, G372, G374, D376, G380, G381, G383, D385, D394, D401, and D411. Hemolysin-type calcium-binding repeat units follow at residues 343–360 (IGGS…DNTL) and 361–378 (RGGA…ADRL).

It belongs to the peptidase M10B family. It depends on Ca(2+) as a cofactor. Zn(2+) is required as a cofactor.

Its subcellular location is the secreted. It carries out the reaction Preferential cleavage of bonds with hydrophobic residues in P1'.. The chain is Serralysin C (prtC) from Dickeya chrysanthemi (Pectobacterium chrysanthemi).